A 617-amino-acid polypeptide reads, in one-letter code: V-type proton ATPase catalytic subunit A (617 aa).

Position 250–257 (250–257 (GAFGCGKT)) interacts with ATP.

This sequence belongs to the ATPase alpha/beta chains family. V-ATPase is a heteromultimeric enzyme made up of two complexes: the ATP-hydrolytic V1 complex and the proton translocation V0 complex. The V1 complex consists of three catalytic AB heterodimers that form a heterohexamer, three peripheral stalks each consisting of EG heterodimers, one central rotor including subunits D and F, and the regulatory subunits C and H. The proton translocation complex V0 consists of the proton transport subunit a, a ring of proteolipid subunits c9c'', rotary subunit d, subunits e and f, and the accessory subunits VhaAC45 and ATP6AP2.

The enzyme catalyses ATP + H2O + 4 H(+)(in) = ADP + phosphate + 5 H(+)(out). Its activity is regulated as follows. ATP hydrolysis occurs at the interface between the nucleotide-binding domains of subunits A and B. ATP hydrolysis triggers a conformational change in the subunits D and F, which induces a shift of subunit d. The c-ring is subsequently rotated and results in a continuous proton translocation across the membrane. In terms of biological role, catalytic subunit of the V1 complex of vacuolar(H+)-ATPase (V-ATPase), a multisubunit enzyme composed of a peripheral complex (V1) that hydrolyzes ATP and a membrane integral complex (V0) that translocates protons. V-ATPase is responsible for acidifying and maintaining the pH of intracellular compartments and in some cell types, is targeted to the plasma membrane, where it is responsible for acidifying the extracellular environment. In Manduca sexta (Tobacco hawkmoth), this protein is V-type proton ATPase catalytic subunit A (VHAA).